The primary structure comprises 379 residues: UDP-4-amino-4-deoxy-L-arabinose--oxoglutarate aminotransferase (379 aa).

N6-(pyridoxal phosphate)lysine is present on Lys182.

It belongs to the DegT/DnrJ/EryC1 family. ArnB subfamily. Homodimer. It depends on pyridoxal 5'-phosphate as a cofactor.

It carries out the reaction UDP-4-amino-4-deoxy-beta-L-arabinose + 2-oxoglutarate = UDP-beta-L-threo-pentopyranos-4-ulose + L-glutamate. It functions in the pathway nucleotide-sugar biosynthesis; UDP-4-deoxy-4-formamido-beta-L-arabinose biosynthesis; UDP-4-deoxy-4-formamido-beta-L-arabinose from UDP-alpha-D-glucuronate: step 2/3. Its pathway is bacterial outer membrane biogenesis; lipopolysaccharide biosynthesis. Functionally, catalyzes the conversion of UDP-4-keto-arabinose (UDP-Ara4O) to UDP-4-amino-4-deoxy-L-arabinose (UDP-L-Ara4N). The modified arabinose is attached to lipid A and is required for resistance to polymyxin and cationic antimicrobial peptides. This is UDP-4-amino-4-deoxy-L-arabinose--oxoglutarate aminotransferase from Escherichia coli O81 (strain ED1a).